Here is a 538-residue protein sequence, read N- to C-terminus: Methyl-accepting chemotaxis protein NahY (538 aa).

Residues 1–9 (MQQFTIRTR) lie on the Cytoplasmic side of the membrane. The chain crosses the membrane as a helical span at residues 10–30 (LLMLVGAMFIGFITIELMGFS). Over 31-187 (ALQRGVASLN…AVVLYDSSRT (157 aa)) the chain is Periplasmic. Residues 188–208 (MLALLLLGILICGGVFATRLI) traverse the membrane as a helical segment. The HAMP domain maps to 209-261 (RSIIHPLTTLKDAAARVALGDLSQSIQVSGRNEVTDVQQSVQAMQANLRNTLQ). At 209 to 538 (RSIIHPLTTL…LNNLVNRFSM (330 aa)) the chain is on the cytoplasmic side. Residues 266–502 (SAAQLAAAAE…EVDRNLVAIS (237 aa)) enclose the Methyl-accepting transducer domain.

It belongs to the methyl-accepting chemotaxis (MCP) protein family.

It is found in the cell inner membrane. Functionally, chemotactic-signal transducers respond to changes in the concentration of attractants and repellents in the environment, transduce a signal from the outside to the inside of the cell, and facilitate sensory adaptation through the variation of the level of methylation. Chemoreceptor for naphthalene or a related compound. May facilitate biodegradation. This Pseudomonas putida (Arthrobacter siderocapsulatus) protein is Methyl-accepting chemotaxis protein NahY (nahY).